The following is a 728-amino-acid chain: Lutropin-choriogonadotropic hormone receptor (728 aa).

The signal sequence occupies residues 1 to 19 (MLPALLPLLLPALLPGAGG). The Extracellular portion of the chain corresponds to 20 to 389 (GRCPQRCACT…DILGYSFLRV (370 aa)). 6 LRR repeats span residues 92 to 116 (LPAL…AFRN), 117 to 142 (LPRL…IFSS), 144 to 166 (AHFI…AFQG), 168 to 191 (SNES…AFNG), 193 to 215 (KLNQ…ALRG), and 216 to 239 (ATGP…GLEA). The chain crosses the membrane as a helical span at residues 390 to 410 (LIWFINILALAGNFIVLLVLI). The Cytoplasmic segment spans residues 411–420 (TSHYKLTVPR). The helical transmembrane segment at 421–441 (FLMCNLSFADFCMGLYLLLIA) threads the bilayer. Over 442 to 466 (SVDAQTSGQYYNHAIDWQTGSGCST) the chain is Extracellular. A disulfide bridge links C464 with C539. Residues 467-487 (AGFFTVFASELSVYTLTVITI) form a helical membrane-spanning segment. Over 488 to 507 (ERWHTITYAMQLDRKLRLRH) the chain is Cytoplasmic. A helical transmembrane segment spans residues 508-528 (AVPIMLGGWVFSILIAVLPLL). The Extracellular portion of the chain corresponds to 529–551 (GVSSYMKVSICLPMDIETGLSQA). A helical transmembrane segment spans residues 552 to 572 (YILLILMLNVIAFLVICACYI). Residues 573-595 (KIYVAVQNPELVAANKDTKIAKR) lie on the Cytoplasmic side of the membrane. Residues 596 to 616 (MAILIFTDFTCMAPISFFAIS) traverse the membrane as a helical segment. The Extracellular segment spans residues 617–630 (AAIKVPLITVTNSK). A helical transmembrane segment spans residues 631–651 (ILLVLFYPVNSCANPFLYAIF). The Cytoplasmic portion of the chain corresponds to 652-728 (TKAFQRDFFL…STKKSQPECQ (77 aa)).

The protein belongs to the G-protein coupled receptor 1 family. FSH/LSH/TSH subfamily. As to expression, expressed in ovarian follicle granulosa cells. Expressed in ovarian follicle theca cells.

It localises to the cell membrane. In terms of biological role, receptor for lutropin-choriogonadotropic hormone. The activity of this receptor is mediated by G proteins which activate adenylate cyclase. The protein is Lutropin-choriogonadotropic hormone receptor of Gallus gallus (Chicken).